The following is an 880-amino-acid chain: Alanine--tRNA ligase (880 aa).

4 residues coordinate Zn(2+): His-567, His-571, Cys-669, and His-673.

Belongs to the class-II aminoacyl-tRNA synthetase family. Requires Zn(2+) as cofactor.

The protein resides in the cytoplasm. The catalysed reaction is tRNA(Ala) + L-alanine + ATP = L-alanyl-tRNA(Ala) + AMP + diphosphate. Functionally, catalyzes the attachment of alanine to tRNA(Ala) in a two-step reaction: alanine is first activated by ATP to form Ala-AMP and then transferred to the acceptor end of tRNA(Ala). Also edits incorrectly charged Ser-tRNA(Ala) and Gly-tRNA(Ala) via its editing domain. This is Alanine--tRNA ligase from Bacillus cereus (strain ZK / E33L).